Reading from the N-terminus, the 442-residue chain is D-serine dehydratase (442 aa).

The residue at position 118 (lysine 118) is an N6-(pyridoxal phosphate)lysine.

This sequence belongs to the serine/threonine dehydratase family. DsdA subfamily. In terms of assembly, monomer. Requires pyridoxal 5'-phosphate as cofactor.

It catalyses the reaction D-serine = pyruvate + NH4(+). The polypeptide is D-serine dehydratase (Escherichia coli O157:H7).